The primary structure comprises 199 residues: Protein-methionine-sulfoxide reductase heme-binding subunit MsrQ (199 aa).

5 helical membrane-spanning segments follow: residues 8–28 (ITWLKVILHLAGLLPFIWLFW), 82–102 (LWCFAWATLHLTSYALLELGI), 116–136 (PYLTLGIVSWVILFALTLTST), 149–169 (FLHNFVYLVAILTPIHYLWSV), and 171–191 (ILSPQPVIYALLALGLLAWRY).

Belongs to the MsrQ family. Heterodimer of a catalytic subunit (MsrP) and a heme-binding subunit (MsrQ). Requires FMN as cofactor. The cofactor is heme b.

Its subcellular location is the cell inner membrane. Part of the MsrPQ system that repairs oxidized periplasmic proteins containing methionine sulfoxide residues (Met-O), using respiratory chain electrons. Thus protects these proteins from oxidative-stress damage caused by reactive species of oxygen and chlorine generated by the host defense mechanisms. MsrPQ is essential for the maintenance of envelope integrity under bleach stress, rescuing a wide series of structurally unrelated periplasmic proteins from methionine oxidation. MsrQ provides electrons for reduction to the reductase catalytic subunit MsrP, using the quinone pool of the respiratory chain. In Enterobacter sp. (strain 638), this protein is Protein-methionine-sulfoxide reductase heme-binding subunit MsrQ.